A 284-amino-acid polypeptide reads, in one-letter code: 4-hydroxy-3-methylbut-2-enyl diphosphate reductase (284 aa).

Cysteine 12 is a binding site for [4Fe-4S] cluster. Histidine 40 and histidine 72 together coordinate (2E)-4-hydroxy-3-methylbut-2-enyl diphosphate. Residues histidine 40 and histidine 72 each contribute to the dimethylallyl diphosphate site. Residues histidine 40 and histidine 72 each coordinate isopentenyl diphosphate. Cysteine 94 serves as a coordination point for [4Fe-4S] cluster. Histidine 122 contributes to the (2E)-4-hydroxy-3-methylbut-2-enyl diphosphate binding site. Dimethylallyl diphosphate is bound at residue histidine 122. Histidine 122 lines the isopentenyl diphosphate pocket. Catalysis depends on glutamate 124, which acts as the Proton donor. Threonine 161 contacts (2E)-4-hydroxy-3-methylbut-2-enyl diphosphate. Cysteine 193 lines the [4Fe-4S] cluster pocket. Positions 221, 223, and 264 each coordinate (2E)-4-hydroxy-3-methylbut-2-enyl diphosphate. Residues serine 221, asparagine 223, and serine 264 each contribute to the dimethylallyl diphosphate site. Positions 221, 223, and 264 each coordinate isopentenyl diphosphate.

This sequence belongs to the IspH family. It depends on [4Fe-4S] cluster as a cofactor.

The enzyme catalyses isopentenyl diphosphate + 2 oxidized [2Fe-2S]-[ferredoxin] + H2O = (2E)-4-hydroxy-3-methylbut-2-enyl diphosphate + 2 reduced [2Fe-2S]-[ferredoxin] + 2 H(+). It catalyses the reaction dimethylallyl diphosphate + 2 oxidized [2Fe-2S]-[ferredoxin] + H2O = (2E)-4-hydroxy-3-methylbut-2-enyl diphosphate + 2 reduced [2Fe-2S]-[ferredoxin] + 2 H(+). The protein operates within isoprenoid biosynthesis; dimethylallyl diphosphate biosynthesis; dimethylallyl diphosphate from (2E)-4-hydroxy-3-methylbutenyl diphosphate: step 1/1. It functions in the pathway isoprenoid biosynthesis; isopentenyl diphosphate biosynthesis via DXP pathway; isopentenyl diphosphate from 1-deoxy-D-xylulose 5-phosphate: step 6/6. Its function is as follows. Catalyzes the conversion of 1-hydroxy-2-methyl-2-(E)-butenyl 4-diphosphate (HMBPP) into a mixture of isopentenyl diphosphate (IPP) and dimethylallyl diphosphate (DMAPP). Acts in the terminal step of the DOXP/MEP pathway for isoprenoid precursor biosynthesis. In Dehalococcoides mccartyi (strain ATCC BAA-2266 / KCTC 15142 / 195) (Dehalococcoides ethenogenes (strain 195)), this protein is 4-hydroxy-3-methylbut-2-enyl diphosphate reductase.